Reading from the N-terminus, the 474-residue chain is Probable protein phosphatase 2C 37 (474 aa).

A disordered region spans residues 1-90 (MVMASAGVNM…RDDDGCSSTA (90 aa)). The span at 57 to 77 (LPASSASPSPSPTSSAASSDC) shows a compositional bias: low complexity. The region spanning 113 to 470 (AFGSVSLAGR…DNISVVVIDL (358 aa)) is the PPM-type phosphatase domain. 3 residues coordinate Mn(2+): aspartate 152, glycine 153, and aspartate 387. The interval 406–434 (LEDGSPTSGRRAARSGEAASSSAGAPAAA) is disordered. Residues 420–434 (SGEAASSSAGAPAAA) show a composition bias toward low complexity. Aspartate 461 is a Mn(2+) binding site.

Belongs to the PP2C family. Requires Mg(2+) as cofactor. It depends on Mn(2+) as a cofactor.

It carries out the reaction O-phospho-L-seryl-[protein] + H2O = L-seryl-[protein] + phosphate. It catalyses the reaction O-phospho-L-threonyl-[protein] + H2O = L-threonyl-[protein] + phosphate. The polypeptide is Probable protein phosphatase 2C 37 (Oryza sativa subsp. japonica (Rice)).